The chain runs to 177 residues: Inorganic pyrophosphatase (177 aa).

3 residues coordinate substrate: K31, R45, and Y57. Mg(2+)-binding residues include D67, D72, and D104. Y141 is a substrate binding site.

This sequence belongs to the PPase family. As to quaternary structure, homohexamer. The cofactor is Mg(2+).

The protein resides in the cytoplasm. The catalysed reaction is diphosphate + H2O = 2 phosphate + H(+). Functionally, catalyzes the hydrolysis of inorganic pyrophosphate (PPi) forming two phosphate ions. This chain is Inorganic pyrophosphatase, found in Halobacterium salinarum (strain ATCC 700922 / JCM 11081 / NRC-1) (Halobacterium halobium).